We begin with the raw amino-acid sequence, 621 residues long: Chaperone protein HtpG (621 aa).

The a; substrate-binding stretch occupies residues 1–341 (MSNQEYTFQT…SEDLPLNVSR (341 aa)). A b region spans residues 342–547 (EILQQNKILA…GDEQNAMMAN (206 aa)). The interval 548–621 (FMRQMGQSVP…RLNSVLLKAL (74 aa)) is c.

It belongs to the heat shock protein 90 family. In terms of assembly, homodimer.

The protein localises to the cytoplasm. Molecular chaperone. Has ATPase activity. The polypeptide is Chaperone protein HtpG (Helicobacter pylori (strain HPAG1)).